A 257-amino-acid polypeptide reads, in one-letter code: MLAKRIIPCLDVRDGQVVKGVQFRNHEIIGDIVPLAKRYAEEGADELVFYDITASSDGRVVDKSWVARVAEVIDIPFCVAGGIKSAQDAARILEFGADKVSINSPALANPQLITDLADRFGVQCIVVGIDSYFDKETGQYQVYQFTGDESRTRATQWQTCDWVQEVQKRGAGEIVLNMMNQDGVRNGYDLEQLNLVRSVCRVPLIASGGAGAMEHFAQAFTQANVDGALAASVFHKQIINIGELKQYLKQQGIEVRR.

Residues Asp11 and Asp130 contribute to the active site.

Belongs to the HisA/HisF family. Heterodimer of HisH and HisF.

It is found in the cytoplasm. The enzyme catalyses 5-[(5-phospho-1-deoxy-D-ribulos-1-ylimino)methylamino]-1-(5-phospho-beta-D-ribosyl)imidazole-4-carboxamide + L-glutamine = D-erythro-1-(imidazol-4-yl)glycerol 3-phosphate + 5-amino-1-(5-phospho-beta-D-ribosyl)imidazole-4-carboxamide + L-glutamate + H(+). It participates in amino-acid biosynthesis; L-histidine biosynthesis; L-histidine from 5-phospho-alpha-D-ribose 1-diphosphate: step 5/9. Its function is as follows. IGPS catalyzes the conversion of PRFAR and glutamine to IGP, AICAR and glutamate. The HisF subunit catalyzes the cyclization activity that produces IGP and AICAR from PRFAR using the ammonia provided by the HisH subunit. The protein is Imidazole glycerol phosphate synthase subunit HisF of Vibrio cholerae serotype O1 (strain ATCC 39541 / Classical Ogawa 395 / O395).